Here is a 361-residue protein sequence, read N- to C-terminus: Histidinol-phosphate aminotransferase (361 aa).

Lys-219 carries the post-translational modification N6-(pyridoxal phosphate)lysine.

The protein belongs to the class-II pyridoxal-phosphate-dependent aminotransferase family. Histidinol-phosphate aminotransferase subfamily. Homodimer. The cofactor is pyridoxal 5'-phosphate.

It catalyses the reaction L-histidinol phosphate + 2-oxoglutarate = 3-(imidazol-4-yl)-2-oxopropyl phosphate + L-glutamate. It functions in the pathway amino-acid biosynthesis; L-histidine biosynthesis; L-histidine from 5-phospho-alpha-D-ribose 1-diphosphate: step 7/9. This Cereibacter sphaeroides (strain KD131 / KCTC 12085) (Rhodobacter sphaeroides) protein is Histidinol-phosphate aminotransferase.